A 95-amino-acid chain; its full sequence is Large ribosomal subunit protein bL25 (95 aa).

This sequence belongs to the bacterial ribosomal protein bL25 family. Part of the 50S ribosomal subunit; part of the 5S rRNA/L5/L18/L25 subcomplex. Contacts the 5S rRNA. Binds to the 5S rRNA independently of L5 and L18.

In terms of biological role, this is one of the proteins that binds to the 5S RNA in the ribosome where it forms part of the central protuberance. The polypeptide is Large ribosomal subunit protein bL25 (Shewanella putrefaciens (strain CN-32 / ATCC BAA-453)).